The primary structure comprises 573 residues: MSRVLSRRDIADRIAKGQTIVIYEDSVLNLDKWIKFHPGGDKSIYHMIGRDATDEMNAYHDDQTITKFKIWKIGRIDYPWENMLPPIQGGRFSKIDERDDIGDYDINLTSKWRSVDESNQYTKIPKNDRLASEAEVKIYPKIPQGVVPSLDLKEAYEKKIVVDPAIVSENYDNERVYEDLTNFPSLDVKNQEWIASEYRKLHGEITAAGLYQCNYVRYLKEFLRIGTLFGISFYLLSLKWFAISAICLGFAWQQLVFIAHDAGHISITHNYQVDNIIGMTVASWIGGLSLGWWKRNHNVHHLVTNDPVHDPDIQHLPFFAVSTRLFHNVYSTYYDKFLWFDKFAQKVVPIQHYLYYPILCFGRFNLYRLSWMHVLLGQGPRRGKAAWFRYYELAGLSFFNYWFFYLIIYKQMPTNAERFKYVMISHIATMIVHVQITLSHFAMSTSDLGVTESFPMRQLRTSMDVDCPRWLDFFHGGLQFQVIHHLFPRLPRHNLRDAQSLVIKFCDKVGIKYSIYGFAAGNDVVISHLQQIAQQAHTMLECAKTMKKEATDTEFHTNKHVLAANVNEKRKQE.

One can recognise a Cytochrome b5 heme-binding domain in the interval 2 to 77; that stretch reads SRVLSRRDIA…FKIWKIGRID (76 aa). 2 residues coordinate heme: His37 and His60. The helical transmembrane segment at 228–248 threads the bilayer; it reads LFGISFYLLSLKWFAISAICL. Residues 260-264 carry the Histidine box-1 motif; sequence HDAGH. A helical transmembrane segment spans residues 273-293; the sequence is VDNIIGMTVASWIGGLSLGWW. The Histidine box-2 motif lies at 297–301; that stretch reads HNVHH. Transmembrane regions (helical) follow at residues 353–372, 393–413, and 422–442; these read YLYY…LSWM, LAGL…KQMP, and VMIS…SHFA. A Histidine box-3 motif is present at residues 481–485; sequence QVIHH.

This sequence belongs to the fatty acid desaturase type 1 family.

It is found in the membrane. The catalysed reaction is an N-acylsphing-4-enine + 2 Fe(II)-[cytochrome b5] + O2 + 2 H(+) = a (4E,8E)-4-sphinga-4,8-dienine ceramide + 2 Fe(III)-[cytochrome b5] + 2 H2O. The protein operates within lipid metabolism; sphingolipid metabolism. Its function is as follows. Delta(8)-fatty-acid desaturase which introduces a double bond at the 8-position in the long-chain base (LCB) of ceramides. Required for the formation of the di-unsaturated sphingoid base (E,E)-sphinga-4,8-dienine during glucosylceramide (GluCer) biosynthesis. The sequence is that of Delta 8-(E)-sphingolipid desaturase from Kluyveromyces lactis (strain ATCC 8585 / CBS 2359 / DSM 70799 / NBRC 1267 / NRRL Y-1140 / WM37) (Yeast).